Here is a 162-residue protein sequence, read N- to C-terminus: Putative 4-hydroxy-4-methyl-2-oxoglutarate aldolase (162 aa).

Residues 75–78 and arginine 97 each bind substrate; that span reads GDML. Aspartate 98 contributes to the a divalent metal cation binding site.

This sequence belongs to the class II aldolase/RraA-like family. In terms of assembly, homotrimer. A divalent metal cation serves as cofactor.

It catalyses the reaction 4-hydroxy-4-methyl-2-oxoglutarate = 2 pyruvate. It carries out the reaction oxaloacetate + H(+) = pyruvate + CO2. Its function is as follows. Catalyzes the aldol cleavage of 4-hydroxy-4-methyl-2-oxoglutarate (HMG) into 2 molecules of pyruvate. Also contains a secondary oxaloacetate (OAA) decarboxylase activity due to the common pyruvate enolate transition state formed following C-C bond cleavage in the retro-aldol and decarboxylation reactions. The protein is Putative 4-hydroxy-4-methyl-2-oxoglutarate aldolase of Stutzerimonas stutzeri (strain A1501) (Pseudomonas stutzeri).